We begin with the raw amino-acid sequence, 487 residues long: Glutamyl-tRNA(Gln) amidotransferase subunit A (487 aa).

Catalysis depends on charge relay system residues K79 and S158. S182 functions as the Acyl-ester intermediate in the catalytic mechanism.

Belongs to the amidase family. GatA subfamily. In terms of assembly, heterotrimer of A, B and C subunits.

It catalyses the reaction L-glutamyl-tRNA(Gln) + L-glutamine + ATP + H2O = L-glutaminyl-tRNA(Gln) + L-glutamate + ADP + phosphate + H(+). Allows the formation of correctly charged Gln-tRNA(Gln) through the transamidation of misacylated Glu-tRNA(Gln) in organisms which lack glutaminyl-tRNA synthetase. The reaction takes place in the presence of glutamine and ATP through an activated gamma-phospho-Glu-tRNA(Gln). This is Glutamyl-tRNA(Gln) amidotransferase subunit A from Ehrlichia canis (strain Jake).